A 252-amino-acid chain; its full sequence is Gastrula zinc finger protein XlCGF28.1 (252 aa).

9 C2H2-type zinc fingers span residues 6–28 (FTCN…LRSH), 34–56 (FTCS…FRGH), 62–84 (SACT…IRSH), 90–112 (YTCT…VRSH), 118–140 (FKCT…LRFH), 146–168 (TTCS…FRVH), 174–196 (FTCT…SYLH), 202–224 (YTCT…SYLH), and 230–252 (FTCT…SHTH).

This sequence belongs to the krueppel C2H2-type zinc-finger protein family.

It is found in the nucleus. In terms of biological role, may be involved in transcriptional regulation. The sequence is that of Gastrula zinc finger protein XlCGF28.1 from Xenopus laevis (African clawed frog).